The chain runs to 493 residues: Probable vesicular acetylcholine transporter-B (493 aa).

Over 1 to 39 (MQSTGAPGLAQSAVLQLSAMGERSRELGGALREPERKRR) the chain is Cytoplasmic. A helical transmembrane segment spans residues 40 to 60 (LLLVVVCVALLLDNMLYMVIV). Residues 61–86 (PIIPDYLADLRGERGNSSADLDIQIG) lie on the Lumenal, vesicle side of the membrane. N-linked (GlcNAc...) asparagine glycosylation is present at N76. A helical membrane pass occupies residues 87–107 (VLFASKALLQLLVNPLSGTFI). Residues 108–113 (DRVGYD) lie on the Cytoplasmic side of the membrane. The chain crosses the membrane as a helical span at residues 114–134 (LPLLIGLLVMFLSTCIFAFAE). At 135 to 143 (NYGTLFAAR) the chain is on the lumenal, vesicle side. Residues 144 to 164 (SLQGLGSAFADTSGIAMIADK) form a helical membrane-spanning segment. Topologically, residues 165–174 (FTEEAERSRA) are cytoplasmic. A helical membrane pass occupies residues 175–195 (LGIALAFISFGSLVAPPFGGI). Topologically, residues 196–203 (LYEFAGKR) are lumenal, vesicle. A helical membrane pass occupies residues 204–224 (VPFIVLACVCLADGVLLLTVV). Residues 225-247 (KPFSDRTRENMPVGTPIHRLMVD) are Cytoplasmic-facing. Residues 248–268 (PYIAVVAGALTVCNIPLAFLE) form a helical membrane-spanning segment. Residues 269–284 (PTIANWMESTMDASKW) lie on the Lumenal, vesicle side of the membrane. Residues 285–305 (QMGLVWLPAFLPHVLGVYITV) form a helical membrane-spanning segment. Over 306 to 315 (RLAARYPERQ) the chain is Cytoplasmic. Residues 316-336 (WFYGALGMVIIGASSCTVPAC) form a helical membrane-spanning segment. The Lumenal, vesicle portion of the chain corresponds to 337–347 (KTFGELVFPLC). A helical membrane pass occupies residues 348–368 (GICFGIALVDTALLPTLAFLV). At 369 to 378 (DVRHVSVYGS) the chain is on the cytoplasmic side. The helical transmembrane segment at 379-399 (VYAIADISYSVAYAMGPVVAG) threads the bilayer. The Lumenal, vesicle portion of the chain corresponds to 400–406 (QIVHNLG). The chain crosses the membrane as a helical span at residues 407–427 (FVQLNLGMGLVNVLYAPALLL). Over 428–493 (LRPVCQIKPS…EEEESGPESA (66 aa)) the chain is Cytoplasmic. Positions 467-493 (GLSAGAGTEHGLRGRSEEEEESGPESA) are disordered. Over residues 483–493 (EEEEESGPESA) the composition is skewed to acidic residues.

Belongs to the major facilitator superfamily. Vesicular transporter family.

Its subcellular location is the membrane. Involved in acetylcholine transport into synaptic vesicles. The chain is Probable vesicular acetylcholine transporter-B (slc18a3b) from Danio rerio (Zebrafish).